The chain runs to 618 residues: Uptake hydrogenase large subunit (618 aa).

Ni(2+) contacts are provided by Cys75, Cys78, Cys597, and Cys600.

This sequence belongs to the [NiFe]/[NiFeSe] hydrogenase large subunit family. As to quaternary structure, heterodimer of a large and a small subunit. Ni(2+) serves as cofactor.

Its subcellular location is the cell membrane. It catalyses the reaction H2 + A = AH2. Functionally, this enzyme recycles the H(2) produced by nitrogenase to increase the production of ATP and to protect nitrogenase against inhibition or damage by O(2) under carbon- or phosphate-limited conditions. The protein is Uptake hydrogenase large subunit (hupB) of Rubrivivax gelatinosus (Rhodocyclus gelatinosus).